A 518-amino-acid chain; its full sequence is MAPKISISLNPPYNGEFYSSNDQMSGIVSLQLTKALSIRKISVILKGFSETLTKIDQEYMFQQNGMMMPGQDNKSFHTLMKFEQRVFPPDNVWNALDGSSKPFKVKPGSYNYSFQFDKFPRKPECLKNHTAKTVAFVTRSNARLPPTFNSHWQEFNKIDNLDLYFYSFGKVIYMVQVQLELGKSSSWFKPFHKLIREIETFEFIPEPKDLIIEPDEDDNEELNAFSNNSRGNSMVTNNEFFNSSNLKVPSKDVKVVNGVGYIKSDRNFSQANSILIENGDIRSRPVSSVTSTRQSTRLVNGMKVFPSTYKMGLPDGESNMRIEVRSRDLKQIYRKDYLFRSGSQNFDKVYVVMEGNIASLSKMQITPLKLQLNLLETTTYLSQGIANGNYSSLKLIEIDLNQLKSNKPLLDLNEIRENFDGSMFECELRLKDHPILRKLVFNEEDYRHRGNRLYSFKTCTIKRTFSLQLLIEWGINGIRKQSEVNIDPVQIFCQVREHVEAEALPRYVPPPTYTEMAS.

A Glycyl lysine isopeptide (Lys-Gly) (interchain with G-Cter in ubiquitin) cross-link involves residue Lys118.

It belongs to the ART10 family. Interacts with RSP5. Post-translationally, ubiquitinated by RSP5.

It is found in the cytoplasm. Its function is as follows. May regulate endocytosis by recruiting RSP5 ubiquitin ligase activity to specific plasma membrane proteins in response to extracellular stimuli. The protein is Arrestin-related trafficking adapter 10 (ART10) of Saccharomyces cerevisiae (strain ATCC 204508 / S288c) (Baker's yeast).